The primary structure comprises 189 residues: Putative lipoprotein LppK (189 aa).

Positions 1–22 (MRRNIRVTLGAATIVAALGLSG) are cleaved as a signal peptide. C23 carries N-palmitoyl cysteine lipidation. C23 is lipidated: S-diacylglycerol cysteine. 2 disordered regions span residues 26–49 (PEFKRSSPPAPSLPPVTSSPLEAA) and 166–189 (MGNSPDSTPSATSPAPAPSPTPPG). Low complexity predominate over residues 169 to 179 (SPDSTPSATSP). The span at 180 to 189 (APAPSPTPPG) shows a compositional bias: pro residues.

It belongs to the MTB12 family.

Its subcellular location is the cell membrane. This Mycobacterium tuberculosis (strain CDC 1551 / Oshkosh) protein is Putative lipoprotein LppK (lppK).